Here is a 701-residue protein sequence, read N- to C-terminus: Polyribonucleotide nucleotidyltransferase (701 aa).

Residues D480 and D486 each contribute to the Mg(2+) site. A KH domain is found at 547–606; it reads PKIDTIKIDVDKIKVVIGKGGETIDKIIAETGVKIDIDDEGNVSIYSSDQAAINRTKEII. The 69-residue stretch at 616–684 folds into the S1 motif domain; the sequence is GEVYHAKVVR…EKGRVDASMK (69 aa). Residues 682–701 form a disordered region; sequence SMKALIPRPPKPEKKEEKHD. The segment covering 691 to 701 has biased composition (basic and acidic residues); sequence PKPEKKEEKHD.

Belongs to the polyribonucleotide nucleotidyltransferase family. Mg(2+) serves as cofactor.

It is found in the cytoplasm. The enzyme catalyses RNA(n+1) + phosphate = RNA(n) + a ribonucleoside 5'-diphosphate. Involved in mRNA degradation. Catalyzes the phosphorolysis of single-stranded polyribonucleotides processively in the 3'- to 5'-direction. This Streptococcus pyogenes serotype M12 (strain MGAS2096) protein is Polyribonucleotide nucleotidyltransferase.